Reading from the N-terminus, the 550-residue chain is Probable terpene synthase 2 (550 aa).

Residues Asp-305, Asp-309, and Glu-457 each coordinate Mg(2+). Positions 305-309 match the DDXXD motif motif; that stretch reads DDIYD.

Belongs to the terpene synthase family. It depends on Mg(2+) as a cofactor.

Functionally, probable sesquiterpene synthase. This is Probable terpene synthase 2 (TPS2) from Ricinus communis (Castor bean).